A 659-amino-acid polypeptide reads, in one-letter code: Methionine--tRNA ligase (659 aa).

The 'HIGH' region motif lies at Tyr-13–His-23. Positions Lys-308–Ser-312 match the 'KMSKS' region motif. Residue Lys-311 coordinates ATP. The tRNA-binding domain occupies Asp-559 to Lys-659.

Belongs to the class-I aminoacyl-tRNA synthetase family. MetG type 2B subfamily. As to quaternary structure, homodimer.

It is found in the cytoplasm. The enzyme catalyses tRNA(Met) + L-methionine + ATP = L-methionyl-tRNA(Met) + AMP + diphosphate. In terms of biological role, is required not only for elongation of protein synthesis but also for the initiation of all mRNA translation through initiator tRNA(fMet) aminoacylation. This chain is Methionine--tRNA ligase, found in Staphylococcus haemolyticus (strain JCSC1435).